The primary structure comprises 324 residues: Homocysteine S-methyltransferase 1 (324 aa).

The Hcy-binding domain maps to 6 to 320; that stretch reads IKELIVEHPG…KDIAEIASAV (315 aa). Cys-238, Cys-305, and Cys-306 together coordinate Zn(2+).

Zn(2+) is required as a cofactor.

Its subcellular location is the cytoplasm. It carries out the reaction S-methyl-L-methionine + L-homocysteine = 2 L-methionine + H(+). In terms of biological role, homocysteine S-methyltransferase involved in the conversion of S-adenosylmethionine (AdoMet) to methionine to control the methionine/AdoMet ratio. Also converts S-methylmethionine (SMM) to methionine. This is Homocysteine S-methyltransferase 1 (MHT1) from Saccharomyces cerevisiae (strain ATCC 204508 / S288c) (Baker's yeast).